Consider the following 328-residue polypeptide: Methionyl-tRNA formyltransferase (328 aa).

(6S)-5,6,7,8-tetrahydrofolate is bound at residue 110-113 (SLLP).

Belongs to the Fmt family.

The enzyme catalyses L-methionyl-tRNA(fMet) + (6R)-10-formyltetrahydrofolate = N-formyl-L-methionyl-tRNA(fMet) + (6S)-5,6,7,8-tetrahydrofolate + H(+). Attaches a formyl group to the free amino group of methionyl-tRNA(fMet). The formyl group appears to play a dual role in the initiator identity of N-formylmethionyl-tRNA by promoting its recognition by IF2 and preventing the misappropriation of this tRNA by the elongation apparatus. This is Methionyl-tRNA formyltransferase from Prochlorococcus marinus (strain AS9601).